The primary structure comprises 343 residues: S-adenosylmethionine:tRNA ribosyltransferase-isomerase (343 aa).

The protein belongs to the QueA family. In terms of assembly, monomer.

It localises to the cytoplasm. The enzyme catalyses 7-aminomethyl-7-carbaguanosine(34) in tRNA + S-adenosyl-L-methionine = epoxyqueuosine(34) in tRNA + adenine + L-methionine + 2 H(+). It functions in the pathway tRNA modification; tRNA-queuosine biosynthesis. Its function is as follows. Transfers and isomerizes the ribose moiety from AdoMet to the 7-aminomethyl group of 7-deazaguanine (preQ1-tRNA) to give epoxyqueuosine (oQ-tRNA). The protein is S-adenosylmethionine:tRNA ribosyltransferase-isomerase of Pseudoalteromonas translucida (strain TAC 125).